A 282-amino-acid chain; its full sequence is Uridylate-specific endoribonuclease B (282 aa).

The region spanning 4–278 is the EndoU domain; sequence GDRELSALIQ…IGTTYPVPVK (275 aa). Residues His156, His172, and Lys218 contribute to the active site.

This sequence belongs to the ENDOU family. As to quaternary structure, monomer. It depends on Mn(2+) as a cofactor.

It carries out the reaction ribonucleotidyl-uridine-RNA = a 5'-end dephospho-uridine-RNA + a 3'-end 2',3'-cyclophospho-ribonucleotide-RNA. Functionally, endoribonuclease that cleaves single-stranded RNAs at 5' of uridylates and releases a product with a 2',3'-cyclic phosphate at the 3'-end. The UU and GU sites are more efficiently cleaved than CU and AU sites. The polypeptide is Uridylate-specific endoribonuclease B (endoub) (Danio rerio (Zebrafish)).